Here is an 870-residue protein sequence, read N- to C-terminus: Leucine--tRNA ligase (870 aa).

The short motif at 42–52 (PYPSGKLHMGH) is the 'HIGH' region element. Positions 629-633 (KMSKS) match the 'KMSKS' region motif. An ATP-binding site is contributed by Lys-632.

Belongs to the class-I aminoacyl-tRNA synthetase family.

The protein localises to the cytoplasm. It carries out the reaction tRNA(Leu) + L-leucine + ATP = L-leucyl-tRNA(Leu) + AMP + diphosphate. The sequence is that of Leucine--tRNA ligase from Azotobacter vinelandii (strain DJ / ATCC BAA-1303).